A 462-amino-acid chain; its full sequence is Argininosuccinate lyase (462 aa).

The protein belongs to the lyase 1 family. Argininosuccinate lyase subfamily.

It localises to the cytoplasm. It catalyses the reaction 2-(N(omega)-L-arginino)succinate = fumarate + L-arginine. Its pathway is amino-acid biosynthesis; L-arginine biosynthesis; L-arginine from L-ornithine and carbamoyl phosphate: step 3/3. This chain is Argininosuccinate lyase, found in Bacillus cytotoxicus (strain DSM 22905 / CIP 110041 / 391-98 / NVH 391-98).